Consider the following 188-residue polypeptide: Large ribosomal subunit protein bL35m (188 aa).

Belongs to the bacterial ribosomal protein bL35 family. In terms of assembly, component of the mitochondrial large ribosomal subunit (mt-LSU). Mature mammalian 55S mitochondrial ribosomes consist of a small (28S) and a large (39S) subunit. The 28S small subunit contains a 12S ribosomal RNA (12S mt-rRNA) and 30 different proteins. The 39S large subunit contains a 16S rRNA (16S mt-rRNA), a copy of mitochondrial valine transfer RNA (mt-tRNA(Val)), which plays an integral structural role, and 52 different proteins.

The protein resides in the mitochondrion. The polypeptide is Large ribosomal subunit protein bL35m (MRPL35) (Homo sapiens (Human)).